A 137-amino-acid chain; its full sequence is Protein MGF 110-7L (137 aa).

The N-terminal stretch at 1–20 is a signal peptide; the sequence is MLVIILGIIGLLASSNLVSS. N-linked (GlcNAc...) asparagine; by host glycosylation is found at Asn-69, Asn-70, and Asn-105.

This sequence belongs to the asfivirus MGF 110 family.

Functionally, plays a role in virus cell tropism, and may be required for efficient virus replication in macrophages. This African swine fever virus (isolate Warthog/Namibia/Wart80/1980) (ASFV) protein is Protein MGF 110-7L.